Reading from the N-terminus, the 833-residue chain is MTEDVKKADGAAPKKLSLQRRTKTTVSTTAGGKAKEVQVEVRKKRTVPTDAAQKAEEARLKAKQEADRLAAEKAKKDAEEKARLEAEKAKQAKAEEAKKAQAVSAPTKAVDVEKEKRRAEEAELRRKADELARQKAEELARKAAEEAKRYAELSEEDAENENSEDYADYHLTSTYAREAEDEEARRKENRNRGGKNKVAKAKKGGREDESSKTERESNRRNQKDGKMGKGKHAKKGSALQQAFTKPAQAVNRDVVIGETITVAELANKMAVKATEVIKTMMKMGAMATINQVIDQETAQLVAEEMGHKVIIRKENELEESVMSDRDVDAELVTRAPVVTIMGHVDHGKTSLLDYIRKAKVASGEAGGITQHIGAYHVETDGKMITFLDTPGHAAFTSMRARGAKATDIVVLVVAADDGVMPQTIEAIQHAKAAGVPIVVAVNKIDKPEANPERVETELLQHEVVAEKFGGDTQFVYVSAKKGTGVDELLEAILLQSEVLELTAVKDGMATGVVIESYLDKGRGPVATILVQTGTLHRGDIVLCGFEYGRVRAMRNENGKDVASAGPSIPVEVLGLSGVPAAGDEATVVRDEKKAREVALYRQGKFREVKLARQQKAKLENMFTNMAEGDVAELNVIVKADVQGSVEAICQSLNELSTAEVKVKVVGSGVGGITETDATLAAASNAIVLGFNVRADASARRIIESESIDLRYYSIIYELLNEIKAAMSGMLQPEFKQEIIGLAEVRDVFRHPKFGAIAGCMVTEGIVKRNNPIRVLRDNVVIFEGELESLRRFKDDVAEVRNGMECGIGVKNYNDVKVGDQIEVFEVVEIKRTI.

A disordered region spans residues 1 to 247; it reads MTEDVKKADG…ALQQAFTKPA (247 aa). Composition is skewed to basic and acidic residues over residues 53–99 and 110–152; these read QKAE…EAKK and VDVE…RYAE. Positions 153-166 are enriched in acidic residues; sequence LSEEDAENENSEDY. Residues 187 to 203 are compositionally biased toward basic residues; sequence KENRNRGGKNKVAKAKK. The span at 204–227 shows a compositional bias: basic and acidic residues; the sequence is GGREDESSKTERESNRRNQKDGKM. In terms of domain architecture, tr-type G spans 333–502; it reads TRAPVVTIMG…LLQSEVLELT (170 aa). The interval 342–349 is G1; the sequence is GHVDHGKT. A GTP-binding site is contributed by 342–349; the sequence is GHVDHGKT. The G2 stretch occupies residues 367–371; that stretch reads GITQH. Positions 388–391 are G3; sequence DTPG. GTP contacts are provided by residues 388-392 and 442-445; these read DTPGH and NKID. The segment at 442-445 is G4; the sequence is NKID. A G5 region spans residues 478-480; it reads SAK.

This sequence belongs to the TRAFAC class translation factor GTPase superfamily. Classic translation factor GTPase family. IF-2 subfamily.

It is found in the cytoplasm. Its function is as follows. One of the essential components for the initiation of protein synthesis. Protects formylmethionyl-tRNA from spontaneous hydrolysis and promotes its binding to the 30S ribosomal subunits. Also involved in the hydrolysis of GTP during the formation of the 70S ribosomal complex. In Pasteurella multocida (strain Pm70), this protein is Translation initiation factor IF-2 (infB).